Reading from the N-terminus, the 417-residue chain is NADH-quinone oxidoreductase subunit D (417 aa).

It belongs to the complex I 49 kDa subunit family. NDH-1 is composed of 14 different subunits. Subunits NuoB, C, D, E, F, and G constitute the peripheral sector of the complex.

It localises to the cell inner membrane. It carries out the reaction a quinone + NADH + 5 H(+)(in) = a quinol + NAD(+) + 4 H(+)(out). In terms of biological role, NDH-1 shuttles electrons from NADH, via FMN and iron-sulfur (Fe-S) centers, to quinones in the respiratory chain. The immediate electron acceptor for the enzyme in this species is believed to be ubiquinone. Couples the redox reaction to proton translocation (for every two electrons transferred, four hydrogen ions are translocated across the cytoplasmic membrane), and thus conserves the redox energy in a proton gradient. This chain is NADH-quinone oxidoreductase subunit D, found in Cupriavidus necator (strain ATCC 17699 / DSM 428 / KCTC 22496 / NCIMB 10442 / H16 / Stanier 337) (Ralstonia eutropha).